The following is a 143-amino-acid chain: Large ribosomal subunit protein uL11 (143 aa).

The protein belongs to the universal ribosomal protein uL11 family. In terms of assembly, part of the ribosomal stalk of the 50S ribosomal subunit. Interacts with L10 and the large rRNA to form the base of the stalk. L10 forms an elongated spine to which L12 dimers bind in a sequential fashion forming a multimeric L10(L12)X complex. One or more lysine residues are methylated.

Its function is as follows. Forms part of the ribosomal stalk which helps the ribosome interact with GTP-bound translation factors. The polypeptide is Large ribosomal subunit protein uL11 (Thioalkalivibrio sulfidiphilus (strain HL-EbGR7)).